We begin with the raw amino-acid sequence, 219 residues long: N-(5'-phosphoribosyl)anthranilate isomerase (219 aa).

It belongs to the TrpF family.

The catalysed reaction is N-(5-phospho-beta-D-ribosyl)anthranilate = 1-(2-carboxyphenylamino)-1-deoxy-D-ribulose 5-phosphate. Its pathway is amino-acid biosynthesis; L-tryptophan biosynthesis; L-tryptophan from chorismate: step 3/5. This Bradyrhizobium sp. (strain BTAi1 / ATCC BAA-1182) protein is N-(5'-phosphoribosyl)anthranilate isomerase.